The chain runs to 2148 residues: Polyketide synthase 1 (2148 aa).

The tract at residues 19–261 (FIFGDQSSCN…TPLAVHAPYH (243 aa)) is N-terminal acylcarrier protein transacylase domain (SAT). Positions 394-829 (ESKIAIIGMS…GGNTALLVED (436 aa)) constitute a Ketosynthase family 3 (KS3) domain. Residues Cys-566, His-701, and His-745 each act as for beta-ketoacyl synthase activity in the active site. The malonyl-CoA:ACP transacylase (MAT) domain stretch occupies residues 929–1233 (AFVFSGQGSQ…PSLMRNKDGW (305 aa)). The For acyl/malonyl transferase activity role is filled by Ser-1018. Positions 1310–1624 (TASVHRIVHE…RKVLNTAMPP (315 aa)) are product template (PT) domain. Residues 1314–1447 (HRIVHESVEK…SSLHFEQPKV (134 aa)) are N-terminal hotdog fold. A PKS/mFAS DH domain is found at 1314 to 1619 (HRIVHESVEK…FQGIPRKVLN (306 aa)). The active-site Proton acceptor; for dehydratase activity is His-1346. Residues 1474–1619 (LNSRMSSGVI…FQGIPRKVLN (146 aa)) form a C-terminal hotdog fold region. Asp-1533 (proton donor; for dehydratase activity) is an active-site residue. A disordered region spans residues 1619 to 1655 (NTAMPPPKSQNEAPVRSGPAKPAAKPPRSASSEHSGH). The segment covering 1634 to 1650 (RSGPAKPAAKPPRSASS) has biased composition (low complexity). The Carrier 1 domain maps to 1678-1752 (RNPMLPVFKI…DLAAHLGLDT (75 aa)). Ser-1712 carries the post-translational modification O-(pantetheine 4'-phosphoryl)serine. Low complexity-rich tracts occupy residues 1757–1769 (QSSG…GGLS) and 1779–1796 (TSSV…SVSG). A disordered region spans residues 1757-1796 (QSSGQSSSFGGLSPRSDSIGEITSSVTTPPSLSPRSSVSG). Residues 1793 to 1870 (SVSGSQCKDV…SFKHMFQQGH (78 aa)) form the Carrier 2 domain. Ser-1830 carries the post-translational modification O-(pantetheine 4'-phosphoryl)serine. The segment at 1882-2146 (LKQYRATSTL…ERVAAFIRST (265 aa)) is thioesterase (TE) domain. Ser-1973 serves as the catalytic For thioesterase activity.

Its function is as follows. Polyketide synthase; part of the Pks1 gene cluster that mediates the biosynthesis of an anthraquinone derivative pigment that contributes to conidial pigmentation that provides protection from UV radiation, heat and cold stress. The polyketide synthase Pks1 produces 1-acetyl-2,4,6,8-tetrahydroxy-9,10-anthraquinone though condensation of acetyl-CoA with malonyl-CoA. The dehydratase EthD and the laccase Mlac1 further convert the anthraquinone derivative into the final conidial pigment. In Metarhizium anisopliae (strain ARSEF 549), this protein is Polyketide synthase 1.